The sequence spans 104 residues: Integration host factor subunit beta (104 aa).

The protein belongs to the bacterial histone-like protein family. Heterodimer of an alpha and a beta chain.

Functionally, this protein is one of the two subunits of integration host factor, a specific DNA-binding protein that functions in genetic recombination as well as in transcriptional and translational control. The protein is Integration host factor subunit beta of Chromobacterium violaceum (strain ATCC 12472 / DSM 30191 / JCM 1249 / CCUG 213 / NBRC 12614 / NCIMB 9131 / NCTC 9757 / MK).